Consider the following 386-residue polypeptide: Patatin-06 (386 aa).

The first 23 residues, 1-23 (MATTKSFLILFFMILATTSSTCA), serve as a signal peptide directing secretion. A PNPLA domain is found at 32–229 (LSIDGGGIKG…TVGDPALLSL (198 aa)). Positions 36–41 (GGGIKG) match the GXGXXG motif. The GXSXG signature appears at 75–79 (GTSTG). Serine 77 serves as the catalytic Nucleophile. Residue asparagine 115 is glycosylated (N-linked (GlcNAc...) asparagine). Aspartate 215 serves as the catalytic Proton acceptor. The DGA/G signature appears at 215 to 217 (DGG). The stretch at 321–384 (ENALTGTTTE…NRKKLRANKA (64 aa)) forms a coiled coil.

The protein belongs to the patatin family. As to expression, tuber.

It localises to the vacuole. Its function is as follows. Probable lipolytic acyl hydrolase (LAH), an activity which is thought to be involved in the response of tubers to pathogens. The polypeptide is Patatin-06 (Solanum tuberosum (Potato)).